Consider the following 211-residue polypeptide: Arginine exporter protein ArgO (211 aa).

At Met-1–Met-38 the chain is on the cytoplasmic side. The chain crosses the membrane as a helical span at residues Ile-39–Gly-58. Residues Ser-59 to Met-63 are Periplasmic-facing. Residues Gln-64–Ala-91 form a helical membrane-spanning segment. Residues Met-92–Glu-102 lie on the Cytoplasmic side of the membrane. A helical transmembrane segment spans residues Val-103–Phe-130. At Val-131–Leu-140 the chain is on the periplasmic side. Residues Asp-141–Leu-170 traverse the membrane as a helical segment. Over Ala-171–Arg-173 the chain is Cytoplasmic. Residues Leu-174–Arg-200 traverse the membrane as a helical segment. The Periplasmic segment spans residues Asp-201–Ser-211.

It belongs to the LysE/ArgO transporter (TC 2.A.75) family. Monomer.

Its subcellular location is the cell inner membrane. The enzyme catalyses L-arginine(in) = L-arginine(out). In terms of biological role, involved in the export of arginine. Important to control the intracellular level of arginine and the correct balance between arginine and lysine. May also be involved in the export of canavanine (a plant-derived antimetabolite). The polypeptide is Arginine exporter protein ArgO (Escherichia coli (strain K12)).